A 211-amino-acid polypeptide reads, in one-letter code: Protein-L-isoaspartate O-methyltransferase (211 aa).

S59 is an active-site residue.

It belongs to the methyltransferase superfamily. L-isoaspartyl/D-aspartyl protein methyltransferase family.

The protein localises to the cytoplasm. It catalyses the reaction [protein]-L-isoaspartate + S-adenosyl-L-methionine = [protein]-L-isoaspartate alpha-methyl ester + S-adenosyl-L-homocysteine. Functionally, catalyzes the methyl esterification of L-isoaspartyl residues in peptides and proteins that result from spontaneous decomposition of normal L-aspartyl and L-asparaginyl residues. It plays a role in the repair and/or degradation of damaged proteins. The protein is Protein-L-isoaspartate O-methyltransferase of Ignicoccus hospitalis (strain KIN4/I / DSM 18386 / JCM 14125).